The chain runs to 476 residues: Probable cytosol aminopeptidase (476 aa).

Mn(2+) contacts are provided by K242 and D247. The active site involves K254. The Mn(2+) site is built by D265, D324, and E326. The active site involves R328.

The protein belongs to the peptidase M17 family. It depends on Mn(2+) as a cofactor.

The protein localises to the cytoplasm. The catalysed reaction is Release of an N-terminal amino acid, Xaa-|-Yaa-, in which Xaa is preferably Leu, but may be other amino acids including Pro although not Arg or Lys, and Yaa may be Pro. Amino acid amides and methyl esters are also readily hydrolyzed, but rates on arylamides are exceedingly low.. It carries out the reaction Release of an N-terminal amino acid, preferentially leucine, but not glutamic or aspartic acids.. In terms of biological role, presumably involved in the processing and regular turnover of intracellular proteins. Catalyzes the removal of unsubstituted N-terminal amino acids from various peptides. The chain is Probable cytosol aminopeptidase from Treponema denticola (strain ATCC 35405 / DSM 14222 / CIP 103919 / JCM 8153 / KCTC 15104).